Reading from the N-terminus, the 318-residue chain is Protein FdhE homolog (318 aa).

It belongs to the FdhE family.

It is found in the cytoplasm. Necessary for formate dehydrogenase activity. In Pseudomonas putida (strain ATCC 47054 / DSM 6125 / CFBP 8728 / NCIMB 11950 / KT2440), this protein is Protein FdhE homolog.